Consider the following 458-residue polypeptide: UDP-N-acetylmuramoylalanine--D-glutamate ligase (458 aa).

G124–T130 is an ATP binding site.

It belongs to the MurCDEF family.

The protein localises to the cytoplasm. The catalysed reaction is UDP-N-acetyl-alpha-D-muramoyl-L-alanine + D-glutamate + ATP = UDP-N-acetyl-alpha-D-muramoyl-L-alanyl-D-glutamate + ADP + phosphate + H(+). It functions in the pathway cell wall biogenesis; peptidoglycan biosynthesis. Cell wall formation. Catalyzes the addition of glutamate to the nucleotide precursor UDP-N-acetylmuramoyl-L-alanine (UMA). This is UDP-N-acetylmuramoylalanine--D-glutamate ligase from Clostridium perfringens (strain 13 / Type A).